Consider the following 728-residue polypeptide: Catalase-peroxidase 1 (728 aa).

Positions W91–Y218 form a cross-link, tryptophyl-tyrosyl-methioninium (Trp-Tyr) (with M-244). H92 functions as the Proton acceptor in the catalytic mechanism. The tryptophyl-tyrosyl-methioninium (Tyr-Met) (with W-91) cross-link spans Y218–M244. Residue H259 participates in heme b binding.

It belongs to the peroxidase family. Peroxidase/catalase subfamily. In terms of assembly, homodimer or homotetramer. Heme b is required as a cofactor. Formation of the three residue Trp-Tyr-Met cross-link is important for the catalase, but not the peroxidase activity of the enzyme.

The catalysed reaction is H2O2 + AH2 = A + 2 H2O. It catalyses the reaction 2 H2O2 = O2 + 2 H2O. Its function is as follows. Bifunctional enzyme with both catalase and broad-spectrum peroxidase activity. The polypeptide is Catalase-peroxidase 1 (Burkholderia ambifaria (strain ATCC BAA-244 / DSM 16087 / CCUG 44356 / LMG 19182 / AMMD) (Burkholderia cepacia (strain AMMD))).